Reading from the N-terminus, the 578-residue chain is CTP synthase 2 (578 aa).

The Glutamine amidotransferase type-1 domain maps to 305 to 564 (KIALVGKYTN…VAAASGTLGD (260 aa)). Residues cysteine 404, histidine 537, and glutamate 539 each act as for GATase activity in the active site.

Belongs to the CTP synthase family. As to quaternary structure, homodimer. Oligomerizes to a tetramer in the presence of its substrates UTP and ATP. Mg(2+) serves as cofactor.

It localises to the cytoplasm. It carries out the reaction UTP + L-glutamine + ATP + H2O = CTP + L-glutamate + ADP + phosphate + 2 H(+). Its pathway is pyrimidine metabolism; CTP biosynthesis via de novo pathway; CTP from UDP: step 2/2. Activated by GTP. Subject to allosteric product inhibition by CTP. Inhibited by p-chloromercuriphenylsulfonic acid, N-ethylmaleimide and cyclopentenylcytosine (CPEC). Functionally, catalyzes the ATP-dependent amination of UTP to CTP with either L-glutamine or ammonia as the source of nitrogen. Plays an important role in the regulation of phospholipid synthesis. The sequence is that of CTP synthase 2 (URA8) from Saccharomyces cerevisiae (strain YJM789) (Baker's yeast).